The primary structure comprises 118 residues: Ribulose bisphosphate carboxylase small subunit (118 aa).

Belongs to the RuBisCO small chain family. As to quaternary structure, heterohexadecamer of 8 large and 8 small subunits.

Functionally, ruBisCO catalyzes two reactions: the carboxylation of D-ribulose 1,5-bisphosphate, the primary event in carbon dioxide fixation, as well as the oxidative fragmentation of the pentose substrate. Both reactions occur simultaneously and in competition at the same active site. Although the small subunit is not catalytic it is essential for maximal activity. The protein is Ribulose bisphosphate carboxylase small subunit of Rhodobacter capsulatus (Rhodopseudomonas capsulata).